Consider the following 235-residue polypeptide: Large ribosomal subunit protein uL1 (235 aa).

Belongs to the universal ribosomal protein uL1 family. In terms of assembly, part of the 50S ribosomal subunit.

Functionally, binds directly to 23S rRNA. The L1 stalk is quite mobile in the ribosome, and is involved in E site tRNA release. Its function is as follows. Protein L1 is also a translational repressor protein, it controls the translation of the L11 operon by binding to its mRNA. This chain is Large ribosomal subunit protein uL1, found in Symbiobacterium thermophilum (strain DSM 24528 / JCM 14929 / IAM 14863 / T).